Reading from the N-terminus, the 433-residue chain is Enolase (433 aa).

Glutamine 167 is a binding site for (2R)-2-phosphoglycerate. Glutamate 209 functions as the Proton donor in the catalytic mechanism. Residues aspartate 246, glutamate 291, and aspartate 318 each contribute to the Mg(2+) site. (2R)-2-phosphoglycerate-binding residues include lysine 343, arginine 372, serine 373, and lysine 394. Lysine 343 serves as the catalytic Proton acceptor.

This sequence belongs to the enolase family. In terms of assembly, component of the RNA degradosome, a multiprotein complex involved in RNA processing and mRNA degradation. The cofactor is Mg(2+).

It localises to the cytoplasm. The protein resides in the secreted. Its subcellular location is the cell surface. It catalyses the reaction (2R)-2-phosphoglycerate = phosphoenolpyruvate + H2O. Its pathway is carbohydrate degradation; glycolysis; pyruvate from D-glyceraldehyde 3-phosphate: step 4/5. Catalyzes the reversible conversion of 2-phosphoglycerate (2-PG) into phosphoenolpyruvate (PEP). It is essential for the degradation of carbohydrates via glycolysis. This Histophilus somni (strain 129Pt) (Haemophilus somnus) protein is Enolase.